The primary structure comprises 123 residues: Large ribosomal subunit protein bL12 (123 aa).

Belongs to the bacterial ribosomal protein bL12 family. In terms of assembly, homodimer. Part of the ribosomal stalk of the 50S ribosomal subunit. Forms a multimeric L10(L12)X complex, where L10 forms an elongated spine to which 2 to 4 L12 dimers bind in a sequential fashion. Binds GTP-bound translation factors.

Functionally, forms part of the ribosomal stalk which helps the ribosome interact with GTP-bound translation factors. Is thus essential for accurate translation. The polypeptide is Large ribosomal subunit protein bL12 (Rickettsia bellii (strain OSU 85-389)).